The primary structure comprises 129 residues: Small ribosomal subunit protein uS9 (129 aa).

The segment at 110-129 (VERKKYGKKKARKSFQFSKR) is disordered. Positions 114–129 (KYGKKKARKSFQFSKR) are enriched in basic residues.

The protein belongs to the universal ribosomal protein uS9 family.

This chain is Small ribosomal subunit protein uS9, found in Chlorobaculum parvum (strain DSM 263 / NCIMB 8327) (Chlorobium vibrioforme subsp. thiosulfatophilum).